A 220-amino-acid chain; its full sequence is Type IV major pilin protein PilA (220 aa).

Positions 1 to 12 are cleaved as a propeptide — leader sequence; the sequence is MRVSRFNPRNRG. Phe-13 carries the post-translational modification N-methylphenylalanine. The helical transmembrane segment at 13-33 threads the bilayer; that stretch reads FTLIELMIVVAIIGILAAIAI.

This sequence belongs to the N-Me-Phe pilin family.

It localises to the fimbrium. The protein localises to the membrane. With respect to regulation, the two-component PilS2/PilR2 is required for proper assembly of T4P and regulation. Its function is as follows. Major component of the type IV pili that are required for social gliding motility through cycles of extension and retraction. Extended pili are composed of thousands of copies of PilA and retract upon binding to extracellular polysaccharides and thereby pull the cell forward. The protein is Type IV major pilin protein PilA (pilA) of Myxococcus xanthus (strain DK1622).